The sequence spans 153 residues: Putative transcription factor YdeB (153 aa).

Belongs to the CarD family.

In Bacillus subtilis (strain 168), this protein is Putative transcription factor YdeB (ydeB).